A 51-amino-acid polypeptide reads, in one-letter code: Large ribosomal subunit protein bL33 (51 aa).

Belongs to the bacterial ribosomal protein bL33 family.

The polypeptide is Large ribosomal subunit protein bL33 (Alkalilimnicola ehrlichii (strain ATCC BAA-1101 / DSM 17681 / MLHE-1)).